Consider the following 85-residue polypeptide: Transcriptional repressor protein KorC (85 aa).

Residues 28–47 (EVLRLAGLTGGKAAKVLGLG) constitute a DNA-binding region (H-T-H motif).

Its function is as follows. Acts with KorA as corepressor in the control of the kilC and kilE operons. This chain is Transcriptional repressor protein KorC (korC), found in Escherichia coli.